Reading from the N-terminus, the 406-residue chain is Transposase for insertion sequence element IS1001 (406 aa).

Belongs to the transposase 12 family.

Involved in the transposition of the insertion sequence. The polypeptide is Transposase for insertion sequence element IS1001 (tnpA) (Bordetella parapertussis).